The chain runs to 111 residues: DNA-directed RNA polymerase subunit Rpo11 (111 aa).

It belongs to the archaeal Rpo11/eukaryotic RPB11/RPC19 RNA polymerase subunit family. As to quaternary structure, part of the RNA polymerase complex.

The protein resides in the cytoplasm. The enzyme catalyses RNA(n) + a ribonucleoside 5'-triphosphate = RNA(n+1) + diphosphate. Functionally, DNA-dependent RNA polymerase (RNAP) catalyzes the transcription of DNA into RNA using the four ribonucleoside triphosphates as substrates. This chain is DNA-directed RNA polymerase subunit Rpo11, found in Thermoplasma acidophilum (strain ATCC 25905 / DSM 1728 / JCM 9062 / NBRC 15155 / AMRC-C165).